The primary structure comprises 259 residues: Deoxyribose-phosphate aldolase (259 aa).

Asp-102 functions as the Proton donor/acceptor in the catalytic mechanism. Lys-167 serves as the catalytic Schiff-base intermediate with acetaldehyde. Catalysis depends on Lys-201, which acts as the Proton donor/acceptor.

The protein belongs to the DeoC/FbaB aldolase family. DeoC type 2 subfamily.

The protein localises to the cytoplasm. It carries out the reaction 2-deoxy-D-ribose 5-phosphate = D-glyceraldehyde 3-phosphate + acetaldehyde. It participates in carbohydrate degradation; 2-deoxy-D-ribose 1-phosphate degradation; D-glyceraldehyde 3-phosphate and acetaldehyde from 2-deoxy-alpha-D-ribose 1-phosphate: step 2/2. Its function is as follows. Catalyzes a reversible aldol reaction between acetaldehyde and D-glyceraldehyde 3-phosphate to generate 2-deoxy-D-ribose 5-phosphate. This chain is Deoxyribose-phosphate aldolase, found in Erwinia tasmaniensis (strain DSM 17950 / CFBP 7177 / CIP 109463 / NCPPB 4357 / Et1/99).